A 311-amino-acid polypeptide reads, in one-letter code: Olfactory receptor 10D1B (311 aa).

Residues 1–24 (MKNLSVVTQFILLGIPHTEGVETM) lie on the Extracellular side of the membrane. The helical transmembrane segment at 25-45 (LFVLFFSFYIFTLVGNLLILL) threads the bilayer. Over 46-54 (AIVSSSRLH) the chain is Cytoplasmic. The helical transmembrane segment at 55–75 (TPMYFFLCQLSVCDIFFPSVS) threads the bilayer. The Extracellular segment spans residues 76–95 (SPKMLFYLSGNTPAISYAGC). Cys-95 and Cys-187 are oxidised to a cystine. Residues 96–116 (VSQLFFYHFLGGTECFLYTVM) traverse the membrane as a helical segment. Topologically, residues 117-137 (AYDRFVAICYPLRYSVIMSHR) are cytoplasmic. Residues 138–158 (ICAFLAMGTAVFGCIHSTFLT) form a helical membrane-spanning segment. Residues 159–192 (TLTFQLPYCGPKDVNYYFCDIPVVMKLACADTST) lie on the Extracellular side of the membrane. The helical transmembrane segment at 193–213 (LEMVGFISVGLMPLSCFFFIL) threads the bilayer. Topologically, residues 214 to 237 (TSYSCIVRSILQIRSTEGRHRAFS) are cytoplasmic. The chain crosses the membrane as a helical span at residues 238 to 258 (TCSAHFTAILLFYMPVIFIYL). The Extracellular segment spans residues 259-271 (RPTPSPWLDATVQ). Residues 272–288 (ILNNLVTPMLNPLIYSL) form a helical membrane-spanning segment. Topologically, residues 289–311 (RNKEVKSSLWTVLHLLCFLPKHL) are cytoplasmic.

The protein belongs to the G-protein coupled receptor 1 family.

The protein resides in the cell membrane. In terms of biological role, odorant receptor. This is Olfactory receptor 10D1B from Mus musculus (Mouse).